The following is a 279-amino-acid chain: Acyl-[acyl-carrier-protein]--UDP-N-acetylglucosamine O-acyltransferase (279 aa).

Belongs to the transferase hexapeptide repeat family. LpxA subfamily. Homotrimer.

The protein localises to the cytoplasm. It catalyses the reaction a (3R)-hydroxyacyl-[ACP] + UDP-N-acetyl-alpha-D-glucosamine = a UDP-3-O-[(3R)-3-hydroxyacyl]-N-acetyl-alpha-D-glucosamine + holo-[ACP]. The protein operates within glycolipid biosynthesis; lipid IV(A) biosynthesis; lipid IV(A) from (3R)-3-hydroxytetradecanoyl-[acyl-carrier-protein] and UDP-N-acetyl-alpha-D-glucosamine: step 1/6. Functionally, involved in the biosynthesis of lipid A, a phosphorylated glycolipid that anchors the lipopolysaccharide to the outer membrane of the cell. This Mesorhizobium japonicum (strain LMG 29417 / CECT 9101 / MAFF 303099) (Mesorhizobium loti (strain MAFF 303099)) protein is Acyl-[acyl-carrier-protein]--UDP-N-acetylglucosamine O-acyltransferase.